A 375-amino-acid chain; its full sequence is Leucoanthocyanidin dioxygenase 1 (375 aa).

The region spanning 218 to 317 (LLLQLKINYY…RLSWVVFCEP (100 aa)) is the Fe2OG dioxygenase domain. 3 residues coordinate Fe cation: His242, Asp244, and His298. Arg308 is a 2-oxoglutarate binding site.

It belongs to the iron/ascorbate-dependent oxidoreductase family. It depends on L-ascorbate as a cofactor. Requires Fe(2+) as cofactor.

It catalyses the reaction a (2R,3S,4S)-leucoanthocyanidin + 2-oxoglutarate + O2 = a 4-H-anthocyanidin with a 3-hydroxy group + succinate + CO2 + 2 H2O. It functions in the pathway pigment biosynthesis; anthocyanin biosynthesis. Its function is as follows. Involved in anthocyanin and protoanthocyanidin biosynthesis by catalyzing the oxidation of leucoanthocyanidins into anthocyanidins. Is able to synthesize anthocyanin pigments from leucoanthocyanidins in aleurone tissue. Converts dihydroquercetin to quercetin in vitro. The sequence is that of Leucoanthocyanidin dioxygenase 1 from Oryza sativa subsp. indica (Rice).